Here is an 819-residue protein sequence, read N- to C-terminus: Transferrin 2 (819 aa).

The signal sequence occupies residues 1–21; sequence MASSLVFVALVGALCFTLANA. The Transferrin-like 1 domain maps to 33–373; sequence MVWCTKSQAE…QYDQYRSERL (341 aa). Cystine bridges form between C36–C78 and C46–C69. 2 N-linked (GlcNAc...) asparagine glycosylation sites follow: N48 and N66. D93 and Y121 together coordinate Fe(3+). Intrachain disulfides connect C147–C237, C190–C213, and C273–C287. A155 and G156 together coordinate hydrogencarbonate. N-linked (GlcNAc...) asparagine glycosylation occurs at N187. A Fe(3+)-binding site is contributed by Y231. Residues 325–361 form a disordered region; it reads GTRDDQSRQGGQSFNSRNNINDQNAYGQFDNNDPYRT. A compositionally biased stretch (polar residues) spans 332-361; that stretch reads RQGGQSFNSRNNINDQNAYGQFDNNDPYRT. An N-linked (GlcNAc...) asparagine glycan is attached at N388. A Transferrin-like 2 domain is found at 450–796; sequence MTLCVTSENE…FMRARRITDC (347 aa). 2 disulfides stabilise this stretch: C453/C490 and C463/C481. Positions 505 and 533 each coordinate Fe(3+). Disulfide bonds link C557/C646, C599/C621, C618/C629, and C687/C701. The hydrogencarbonate site is built by T559, A565, and G566. N-linked (GlcNAc...) asparagine glycosylation occurs at N720. C796 carries GPI-anchor amidated cysteine lipidation. A propeptide spans 797–819 (removed in mature form); that stretch reads YAGASQLALSVGLLLVGSLVAML.

Belongs to the transferrin family. In terms of assembly, forms a complex composed of septa junction proteins Nrx-IV/Nrx, Tsf2/MTf, Cont and Nrg during late embryogenesis.

Its subcellular location is the apicolateral cell membrane. It is found in the cell junction. The protein localises to the septate junction. In terms of biological role, iron-binding protein and component of septate junctions that form the paracellular permeability barrier in epithelial tissues. In an iron-dependent manner, required for septate junction assembly during epithelial maturation in embryos and mature septa junctions stability. This is Transferrin 2 from Drosophila melanogaster (Fruit fly).